A 332-amino-acid chain; its full sequence is D-xylose-binding periplasmic protein (332 aa).

The first 23 residues, 1–23, serve as a signal peptide directing secretion; it reads MKIKSALLTLVGALTVFSSSAHS.

The protein belongs to the bacterial solute-binding protein 2 family.

It localises to the periplasm. Functionally, involved in the high-affinity D-xylose membrane transport system. Binds with high affinity to xylose. The chain is D-xylose-binding periplasmic protein (xylF) from Haemophilus influenzae (strain ATCC 51907 / DSM 11121 / KW20 / Rd).